The primary structure comprises 488 residues: Rhamnulokinase (488 aa).

13–17 (ASSGR) contributes to the ATP binding site. An intrachain disulfide couples Cys-68 to Cys-222. Substrate is bound by residues Gly-83 and 236-238 (HDT). Asp-237 acts as the Proton acceptor in catalysis. ATP is bound at residue Thr-259. Residue Asn-296 participates in substrate binding. Gln-304 contacts ATP. The cysteines at positions 353 and 370 are disulfide-linked. Gly-402 is a binding site for ATP. A disulfide bond links Cys-413 and Cys-417.

It belongs to the rhamnulokinase family. Mg(2+) serves as cofactor.

It carries out the reaction L-rhamnulose + ATP = L-rhamnulose 1-phosphate + ADP + H(+). The protein operates within carbohydrate degradation; L-rhamnose degradation; glycerone phosphate from L-rhamnose: step 2/3. Its function is as follows. Involved in the catabolism of L-rhamnose (6-deoxy-L-mannose). Catalyzes the transfer of the gamma-phosphate group from ATP to the 1-hydroxyl group of L-rhamnulose to yield L-rhamnulose 1-phosphate. This chain is Rhamnulokinase, found in Klebsiella pneumoniae subsp. pneumoniae (strain ATCC 700721 / MGH 78578).